We begin with the raw amino-acid sequence, 1345 residues long: MAPEASPERSCSLHTCPLEDPTGAPVPPPTVSTLQAIDPTSPLTAGHFAFPRAPQDYQEGSSLLGLGDQASLCAHVSNLSTSIDTSQHDGVWKQPSVQRHVVSVRQERTFRMPKSYSHMIADWPVAVIVGCLAFIFLCTLAGLLGSPPLDFSEPLLGFEPRDTEIGRRLEVWKAMQALTGPKNLLSLSPDPEMNSSSLLSTLSPAAWGRAEESVVRTKRMVGPVEVKEEENFFCGRPEKSHAKLVFVSTSGGSLWNLQAIHSMCRIEQEQIRSHISFGALCQRSAANECCPSWSLGNYLAVLSNRSSCQDTTQADTDRTLALLRFCATFYHRGVLVPACVGSSQDKPPFCAQVPAKCTGSNVVYEFLHYLLDRDFLSPQTADYQVPSLKFALLFLPIIKTSSLLDIYLDGLGDPIKVSDNYTSISGMDLGLKPRLLKYYLAEDTMYPLIALVVIFFGMSLYLRSLFITFMSLLGVLGSLMVAYFLYHVAFRMAYFPFVNLAALLLLSGVCVNYTLIFLDMWRLSRGQVPSGGMPHRVGRTMHHFGYLLLVSGLTTSAAFYGSYLSRLPAVRCFALFMGTAVLVHMGLTLLWLPATVVLHERYLAHGCVAQAHGQRGGSDPLRLLLALHRRIRIFRKIISILSRLLFQRLLPCGVIKFRYIWICWFAALAAGGAYIGGVSPRLQLPILLPLGGQFFRSSHPFERFDAEYRQQFLFEDLPPNEGGNLPVVLVWGILPVDTSDPLDPRTNSSVVSDPDFSPSSPEAQEWLLALCHGAQNQSFFGDQPEGWPTLCLVEALQQWMESPSCGRLGPDLCCGQSEFPWAPQLYLHCLKMMALEQSPDGTRDLGLRFDTHGNLAALVLKFQTNLPYSTEYGPVHHFYTEISRWLSTEMSKAPPGLNQGWFTSNLELYSLQHSLSTEPAVVLGLALALAFATLLLSTWNVPLSLFSVAAVAGTVLLTVGLLVLLEWQLNTAEALFLSASVGLSVDLTINYCISYHLCPHPDRLSRVAFSLRQISRATAMTTGVLFASGVIMLPSTILLYRKLGIIVMMVKFLGCGFASFFFQSLCCFFGPEKNCGQILWPCAHLPWDAGTEDPDEKGRAGPPGFSEHYELQPLARRRSPSFDTSTATSKLSHRPSILSEDLQIHDGSCCLQHAQAPVSPRDLLLDHQTVFSQCPALQTSSPYKQAGPTPQTWIRQDSQGQKTEPLQALPEGPAHCPKSKVEELPDGLCSSASTLEGLSVSDDTCASEHSVRVPDSVGTSPEVMNGTGHPILERGQLNGKRDTLWLALKETIYDPNMPNSHHSSLSWKGRGGPGDISPVMLPNSQPDLPDVWLRRPSTYTSGYSS.

The tract at residues 1 to 28 (MAPEASPERSCSLHTCPLEDPTGAPVPP) is disordered. A helical membrane pass occupies residues 125-145 (VAVIVGCLAFIFLCTLAGLLG). N-linked (GlcNAc...) asparagine glycosylation is found at Asn-304 and Asn-420. Positions 429 to 598 (LGLKPRLLKY…LLWLPATVVL (170 aa)) constitute an SSD domain. 6 consecutive transmembrane segments (helical) span residues 440–460 (LAEDTMYPLIALVVIFFGMSL), 465–485 (LFITFMSLLGVLGSLMVAYFL), 497–517 (FVNLAALLLLSGVCVNYTLIF), 544–564 (FGYLLLVSGLTTSAAFYGSYL), 572–592 (CFALFMGTAVLVHMGLTLLWL), and 659–679 (YIWICWFAALAAGGAYIGGVS). N-linked (GlcNAc...) asparagine glycosylation is present at Asn-776. The next 5 membrane-spanning stretches (helical) occupy residues 919 to 939 (PAVVLGLALALAFATLLLSTW), 945 to 965 (LFSVAAVAGTVLLTVGLLVLL), 974 to 994 (ALFLSASVGLSVDLTINYCIS), 1019 to 1039 (AMTTGVLFASGVIMLPSTILL), and 1043 to 1063 (LGIIVMMVKFLGCGFASFFFQ). 2 disordered regions span residues 1251 to 1271 (VRVPDSVGTSPEVMNGTGHPI) and 1295 to 1345 (PNMP…GYSS). Residues 1297 to 1306 (MPNSHHSSLS) are compositionally biased toward polar residues. An Omega-N-methylarginine modification is found at Arg-1310.

It belongs to the dispatched family.

Its subcellular location is the membrane. This chain is Protein dispatched homolog 2 (Disp2), found in Mus musculus (Mouse).